Consider the following 342-residue polypeptide: Dihydroorotase (342 aa).

Positions 13 and 15 each coordinate Zn(2+). Residues 15 to 17 and Asn-41 each bind substrate; that span reads HLR. Zn(2+) contacts are provided by Lys-98, His-135, and His-173. Lys-98 bears the N6-carboxylysine mark. Residue His-135 coordinates substrate. Leu-218 is a binding site for substrate. Zn(2+) is bound at residue Asp-246. Residue Asp-246 is part of the active site. Substrate contacts are provided by His-250 and Ala-262.

Belongs to the metallo-dependent hydrolases superfamily. DHOase family. Class II DHOase subfamily. Homodimer. Requires Zn(2+) as cofactor.

The catalysed reaction is (S)-dihydroorotate + H2O = N-carbamoyl-L-aspartate + H(+). The protein operates within pyrimidine metabolism; UMP biosynthesis via de novo pathway; (S)-dihydroorotate from bicarbonate: step 3/3. Its function is as follows. Catalyzes the reversible cyclization of carbamoyl aspartate to dihydroorotate. This Vibrio campbellii (strain ATCC BAA-1116) protein is Dihydroorotase.